Consider the following 238-residue polypeptide: MTGNTERLLIETTTAWGIPLSEHQYAQFQRYLDELIIWNDRFNLTAIRDRSAMIRRHLLDSLYLARDWQTAPANLIDIGSGAGFPALPLKIAYPTLPVTLVEATGKKAEFLRHVIECLELTDVRVLHERIETVGRNLAEREQYEVVTARAVAELRVLVEYALPLLRIGGRLLAPKGRDPTDEIAAAQRALHVLGGEVSACEPVHIPGEEPRSLVIITKIAPTPSRFPRAIGIPARRPL.

S-adenosyl-L-methionine-binding positions include Gly79, Phe84, Glu102–Thr104, Ile130–Glu131, and Arg149.

Belongs to the methyltransferase superfamily. RNA methyltransferase RsmG family.

It localises to the cytoplasm. Functionally, specifically methylates the N7 position of a guanine in 16S rRNA. The polypeptide is Ribosomal RNA small subunit methyltransferase G (Chloroflexus aggregans (strain MD-66 / DSM 9485)).